Here is a 196-residue protein sequence, read N- to C-terminus: ATP-dependent Clp protease proteolytic subunit (196 aa).

The active-site Nucleophile is the Ser98. His123 is a catalytic residue.

This sequence belongs to the peptidase S14 family. As to quaternary structure, fourteen ClpP subunits assemble into 2 heptameric rings which stack back to back to give a disk-like structure with a central cavity, resembling the structure of eukaryotic proteasomes.

The protein resides in the cytoplasm. It catalyses the reaction Hydrolysis of proteins to small peptides in the presence of ATP and magnesium. alpha-casein is the usual test substrate. In the absence of ATP, only oligopeptides shorter than five residues are hydrolyzed (such as succinyl-Leu-Tyr-|-NHMec, and Leu-Tyr-Leu-|-Tyr-Trp, in which cleavage of the -Tyr-|-Leu- and -Tyr-|-Trp bonds also occurs).. In terms of biological role, cleaves peptides in various proteins in a process that requires ATP hydrolysis. Has a chymotrypsin-like activity. Plays a major role in the degradation of misfolded proteins. This is ATP-dependent Clp protease proteolytic subunit from Acidobacterium capsulatum (strain ATCC 51196 / DSM 11244 / BCRC 80197 / JCM 7670 / NBRC 15755 / NCIMB 13165 / 161).